The following is a 281-amino-acid chain: Ribosomal protein L11 methyltransferase (281 aa).

S-adenosyl-L-methionine is bound by residues Thr-133, Gly-154, Asp-175, and Asn-216.

Belongs to the methyltransferase superfamily. PrmA family.

Its subcellular location is the cytoplasm. The catalysed reaction is L-lysyl-[protein] + 3 S-adenosyl-L-methionine = N(6),N(6),N(6)-trimethyl-L-lysyl-[protein] + 3 S-adenosyl-L-homocysteine + 3 H(+). Its function is as follows. Methylates ribosomal protein L11. This Campylobacter jejuni subsp. jejuni serotype O:2 (strain ATCC 700819 / NCTC 11168) protein is Ribosomal protein L11 methyltransferase.